Reading from the N-terminus, the 237-residue chain is Probable transcriptional regulatory protein NIS_0560 (237 aa).

It belongs to the TACO1 family.

It localises to the cytoplasm. The chain is Probable transcriptional regulatory protein NIS_0560 from Nitratiruptor sp. (strain SB155-2).